The primary structure comprises 266 residues: Small ribosomal subunit protein eS1 (266 aa).

The segment at 234-266 is disordered; the sequence is EGGTGTATKATGDDTGAKVERADGYEPPIQETV. A compositionally biased stretch (basic and acidic residues) spans 244–257; the sequence is TGDDTGAKVERADG.

The protein belongs to the eukaryotic ribosomal protein eS1 family. Component of the small ribosomal subunit. Mature ribosomes consist of a small (40S) and a large (60S) subunit. The 40S subunit contains about 33 different proteins and 1 molecule of RNA (18S). The 60S subunit contains about 49 different proteins and 3 molecules of RNA (28S, 5.8S and 5S). Part of the small subunit (SSU) processome, composed of more than 70 proteins and the RNA chaperone small nucleolar RNA (snoRNA) U3.

The protein localises to the cytoplasm. The protein resides in the nucleus. Its subcellular location is the nucleolus. Its function is as follows. Component of the small ribosomal subunit. The ribosome is a large ribonucleoprotein complex responsible for the synthesis of proteins in the cell. Part of the small subunit (SSU) processome, first precursor of the small eukaryotic ribosomal subunit. During the assembly of the SSU processome in the nucleolus, many ribosome biogenesis factors, an RNA chaperone and ribosomal proteins associate with the nascent pre-rRNA and work in concert to generate RNA folding, modifications, rearrangements and cleavage as well as targeted degradation of pre-ribosomal RNA by the RNA exosome. May play a role during erythropoiesis. The polypeptide is Small ribosomal subunit protein eS1 (rps3a) (Solea senegalensis (Senegalese sole)).